Reading from the N-terminus, the 477-residue chain is Protein U33 (477 aa).

Belongs to the herpesviridae UL49 family.

In Homo sapiens (Human), this protein is Protein U33 (U33).